Here is a 1673-residue protein sequence, read N- to C-terminus: AF4/FMR2 family member lilli (1673 aa).

9 disordered regions span residues Met1–Asn24, Tyr54–Ile80, Ser125–Lys302, Gln407–Asn534, Val575–Trp604, Arg722–Leu1086, Gln1114–Pro1133, Arg1141–Thr1160, and Lys1187–Glu1315. Over residues Arg71–Ile80 the composition is skewed to basic and acidic residues. Composition is skewed to low complexity over residues Ser146 to Gln180 and Pro223 to Val244. Thr420 is modified (phosphothreonine). Basic and acidic residues predominate over residues Leu428 to Ser441. Acidic residues predominate over residues Leu443–Asp454. Residues Ser450 and Ser452 each carry the phosphoserine modification. Residues Gly465–Asn486 are compositionally biased toward low complexity. Over residues His491–Gln500 the composition is skewed to basic residues. Over residues Leu501 to Gln525 the composition is skewed to low complexity. The segment covering Thr577–Ser586 has biased composition (gly residues). Positions Lys594 to Trp604 are enriched in polar residues. The span at Ser724 to Glu757 shows a compositional bias: low complexity. A compositionally biased stretch (polar residues) spans Gln775 to Val788. The segment covering Gln802–Ala812 has biased composition (basic residues). Phosphoserine occurs at positions 821 and 822. A DNA-binding region (a.T hook) is located at residues Lys851 to Ser863. Positions Gln860–Ala898 are enriched in low complexity. A phosphoserine mark is found at Ser871 and Ser873. Over residues Ser909–Thr919 the composition is skewed to polar residues. Composition is skewed to low complexity over residues Ser949–Ser965 and Gly993–Ser1004. Residues Thr1011–Ala1022 show a composition bias toward polar residues. Residues Ser1034–Ser1060 show a composition bias toward low complexity. The segment covering Glu1065 to Lys1082 has biased composition (basic and acidic residues). A compositionally biased stretch (polar residues) spans Pro1190–Asn1205. 2 stretches are compositionally biased toward basic and acidic residues: residues Glu1226–Phe1243 and Phe1252–Pro1282. Ser1362 carries the phosphoserine modification. A Phosphothreonine modification is found at Thr1364. The span at Asn1564–Asn1583 shows a compositional bias: low complexity. Positions Asn1564–Arg1588 are disordered.

This sequence belongs to the AF4 family. As to quaternary structure, component of the super elongation complex (SEC), at least composed of Ell, Cdk9, cyclin-T (CycT), lilli and ear.

The protein localises to the nucleus. Its function is as follows. Has a role in transcriptional regulation. Acts in parallel with the Ras/MAPK and the PI3K/PKB pathways in the control of cell identity and cellular growth. Essential for regulation of the cytoskeleton and cell growth but not for cell proliferation or growth rate. Required specifically for the microtubule-based basal transport of lipid droplets. Plays a partially redundant function downstream of Raf in cell fate specification in the developing eye. Pair-rule protein that regulates embryonic cellularization, gastrulation and segmentation. The chain is AF4/FMR2 family member lilli from Drosophila melanogaster (Fruit fly).